The chain runs to 334 residues: Glucokinase-like protein XF_1460 (334 aa).

18 to 23 contacts ATP; that stretch reads ADVGGT.

It belongs to the bacterial glucokinase family.

The chain is Glucokinase-like protein XF_1460 from Xylella fastidiosa (strain 9a5c).